We begin with the raw amino-acid sequence, 215 residues long: uncharacterized protein (215 aa).

Residues 98–119 traverse the membrane as a helical segment; the sequence is AAALAVAVASLCVCTLLLTHIV.

It localises to the membrane. This is an uncharacterized protein from Treponema pallidum (strain Nichols).